A 142-amino-acid chain; its full sequence is Transcriptional regulator MraZ (142 aa).

SpoVT-AbrB domains are found at residues 5-51 (ASAL…PRPE) and 77-120 (AADV…DAAT).

Belongs to the MraZ family. Forms oligomers.

It localises to the cytoplasm. The protein resides in the nucleoid. The chain is Transcriptional regulator MraZ from Ralstonia nicotianae (strain ATCC BAA-1114 / GMI1000) (Ralstonia solanacearum).